The sequence spans 238 residues: Probable xyloglucan-specific endo-beta-1,4-glucanase A (238 aa).

The N-terminal stretch at 1–18 (MKFSLSVALSLAAATAQA) is a signal peptide. N106 and N171 each carry an N-linked (GlcNAc...) asparagine glycan.

The protein belongs to the glycosyl hydrolase 12 (cellulase H) family.

It localises to the secreted. It catalyses the reaction xyloglucan + H2O = xyloglucan oligosaccharides.. Functionally, catalyzes endohydrolysis of 1,4-beta-D-glucosidic linkages in xyloglucan with retention of the beta-configuration of the glycosyl residues. Specific for xyloglucan and does not hydrolyze other cell wall components. The protein is Probable xyloglucan-specific endo-beta-1,4-glucanase A (xgeA) of Neosartorya fischeri (strain ATCC 1020 / DSM 3700 / CBS 544.65 / FGSC A1164 / JCM 1740 / NRRL 181 / WB 181) (Aspergillus fischerianus).